The chain runs to 1100 residues: Guanylate cyclase 2G (1100 aa).

The signal sequence occupies residues 1 to 43 (MASRTRSESPLEPRLYAGAGSRADHPSLVLMLSVVMLVTCLEA). Over 44 to 481 (AKLTVGFHAP…VAGMTVTVTA (438 aa)) the chain is Extracellular. Residues N55, N85, N94, N217, N225, N238, N418, N440, and N443 are each glycosylated (N-linked (GlcNAc...) asparagine). Residues 482–502 (VIPTVTFLVLASAAAITGLML) form a helical membrane-spanning segment. Residues 503–1100 (WRLRGKVQSH…EEEAKVSEIL (598 aa)) lie on the Cytoplasmic side of the membrane. Residues 546–837 (SDTSTVKASA…EASPRGHVSI (292 aa)) enclose the Protein kinase domain. Residues 901-1031 (TIFFSDIVGF…DTVNMASRME (131 aa)) form the Guanylate cyclase domain.

This sequence belongs to the adenylyl cyclase class-4/guanylyl cyclase family. Homooligomer. In vitro interacts with NPR1/GC-A. N-glycosylated. Highly expressed in testis.

It localises to the cell membrane. The catalysed reaction is GTP = 3',5'-cyclic GMP + diphosphate. This Mus musculus (Mouse) protein is Guanylate cyclase 2G (Gucy2g).